The primary structure comprises 482 residues: MKFIIKLFPEITIKSQSVRLRFIKILTGNIRNVLKNYDETLAVVRHWDHIEVRAKDENQRPAIRDALTRIPGIHHILEVEDVPFTSLHDIFEQTLPLWREALEGKTFCVRVKRRGKHEFTSIEVERYVGGGLNQHIETARVKLTDPDVTVNLEIENDRLLLVKGRYEGIGGFPIGTQEDVLSLISGGFDSGVSSYMLMRRGCRVHYCFFNLGGAAHEIGVRQVAHYLWNRFGSSHRVRFVAINFEPVVGEILEKVDDGQMGVVLKRMMVRAASKVAERYGVQALVTGEALGQVSSQTLTNLRLIDNVSDTLILRPLISHDKEHIIDLAREIGTEDFARTMPEYCGVISKSPTVKAVKAKIEAEEEHFDFSILDKVVEEASNIDIREIAQQTEETVVEVETVTGFGANDAILDIRSIDEQEDKPLKVEGVEVVSLPFYKLSTKFGDLDQSKTWLLWCERGVMSRLQALYLREQGFSNVKVYRP.

In terms of domain architecture, THUMP spans 61 to 165; the sequence is PAIRDALTRI…NDRLLLVKGR (105 aa). ATP contacts are provided by residues 183–184, lysine 265, glycine 287, and glutamine 296; that span reads LI. Cysteine 344 and cysteine 456 are joined by a disulfide. Positions 404–482 constitute a Rhodanese domain; the sequence is FGANDAILDI…GFSNVKVYRP (79 aa). Cysteine 456 functions as the Cysteine persulfide intermediate in the catalytic mechanism.

It belongs to the ThiI family.

It localises to the cytoplasm. The catalysed reaction is [ThiI sulfur-carrier protein]-S-sulfanyl-L-cysteine + a uridine in tRNA + 2 reduced [2Fe-2S]-[ferredoxin] + ATP + H(+) = [ThiI sulfur-carrier protein]-L-cysteine + a 4-thiouridine in tRNA + 2 oxidized [2Fe-2S]-[ferredoxin] + AMP + diphosphate. The enzyme catalyses [ThiS sulfur-carrier protein]-C-terminal Gly-Gly-AMP + S-sulfanyl-L-cysteinyl-[cysteine desulfurase] + AH2 = [ThiS sulfur-carrier protein]-C-terminal-Gly-aminoethanethioate + L-cysteinyl-[cysteine desulfurase] + A + AMP + 2 H(+). It functions in the pathway cofactor biosynthesis; thiamine diphosphate biosynthesis. Functionally, catalyzes the ATP-dependent transfer of a sulfur to tRNA to produce 4-thiouridine in position 8 of tRNAs, which functions as a near-UV photosensor. Also catalyzes the transfer of sulfur to the sulfur carrier protein ThiS, forming ThiS-thiocarboxylate. This is a step in the synthesis of thiazole, in the thiamine biosynthesis pathway. The sulfur is donated as persulfide by IscS. The protein is tRNA sulfurtransferase of Klebsiella pneumoniae subsp. pneumoniae (strain ATCC 700721 / MGH 78578).